The primary structure comprises 462 residues: Cysteine proteinase RD21A (462 aa).

The first 21 residues, 1-21, serve as a signal peptide directing secretion; that stretch reads MGFLKPTMAILFLAMVAVSSA. Positions 22–136 are cleaved as a propeptide — activation peptide; it reads VDMSIISYDE…LRYEARVGDE (115 aa). Residue Asn-90 is glycosylated (N-linked (GlcNAc...) asparagine). Intrachain disulfides connect Cys-158/Cys-200, Cys-192/Cys-233, Cys-291/Cys-342, Cys-375/Cys-387, and Cys-381/Cys-402. Cys-161 is an active-site residue. Active-site residues include His-297 and Asn-317. A propeptide spans 353–462 (removed in mature form); sequence KNGENPPNPG…FWSQGRKNIA (110 aa). N-linked (GlcNAc...) asparagine glycosylation is present at Asn-414.

It belongs to the peptidase C1 family. In terms of assembly, interacts with SERPIN1. Interacts with PRN2. Interacts with WSCP. Interacts with TZF4, TZF5 and TZF6.

The protein resides in the vacuole. Its subcellular location is the golgi apparatus. The protein localises to the cytoplasm. It localises to the stress granule. It is found in the P-body. With respect to regulation, inhibited by the cysteine protease inhibitor E64 (L-trans-epoxysuccinyl-leucylamide-(4-guanido)-butane). Cysteine protease that plays a role in immunity, senescence, and biotic and abiotic stresses. Involved in immunity against the necrotrophic fungal pathogen Botrytis cinerea. Involved in elicitor-stimulated programmed cell death (PCD). During infection by the necrotrophic fungal pathogen Botrytis cinerea, functions as a PCD-promoting protease that is released from the ER body or vacuole to the cytoplasm. Accumulates in endoplasmic reticulum-derived bodies in epidermal cells and may participate in cell death in stressed or injured cells. Involved in water stress-induced cell death through its protease activity that is released to the cytoplasm after vacuolar collapse. Possesses protease activity in vitro and is involved in cell death in the transmitting tract and septum epidermis during flower development. Possesses peptide ligase activity. Can ligate peptides to unmodified N-termini of acceptor proteins. Probably ligates through a thioester intermediate. The protein is Cysteine proteinase RD21A of Arabidopsis thaliana (Mouse-ear cress).